Reading from the N-terminus, the 329-residue chain is Porphobilinogen deaminase (329 aa).

Cys-250 carries the post-translational modification S-(dipyrrolylmethanemethyl)cysteine.

It belongs to the HMBS family. In terms of assembly, monomer. Dipyrromethane is required as a cofactor.

The catalysed reaction is 4 porphobilinogen + H2O = hydroxymethylbilane + 4 NH4(+). The protein operates within porphyrin-containing compound metabolism; protoporphyrin-IX biosynthesis; coproporphyrinogen-III from 5-aminolevulinate: step 2/4. Functionally, tetrapolymerization of the monopyrrole PBG into the hydroxymethylbilane pre-uroporphyrinogen in several discrete steps. The polypeptide is Porphobilinogen deaminase (Burkholderia mallei (strain NCTC 10247)).